Reading from the N-terminus, the 465-residue chain is GDNF family receptor alpha-2 (465 aa).

A signal peptide spans 1–21 (MILANAFCIVLFVDETLRSLA). 14 disulfide bridges follow: cysteine 40–cysteine 93, cysteine 47–cysteine 53, cysteine 63–cysteine 78, cysteine 95–cysteine 105, cysteine 159–cysteine 220, cysteine 166–cysteine 172, cysteine 183–cysteine 198, cysteine 193–cysteine 239, cysteine 222–cysteine 227, cysteine 249–cysteine 321, cysteine 256–cysteine 262, cysteine 273–cysteine 291, cysteine 283–cysteine 345, and cysteine 323–cysteine 333. Residues asparagine 355, asparagine 387, and asparagine 412 are each glycosylated (N-linked (GlcNAc...) asparagine). Serine 445 carries the GPI-anchor amidated serine lipid modification. Positions 446–465 (RHRAARILPAVPIVLLKLLL) are cleaved as a propeptide — removed in mature form.

Belongs to the GDNFR family. As to quaternary structure, interacts with NRTN ligand and RET: forms a 2:2:2 ternary complex composed of NRTN ligand, GFRA2 and RET receptor.

It localises to the cell membrane. Functionally, receptor for neurturin (NRTN), a growth factor that supports the survival of sympathetic neurons. NRTN-binding leads to autophosphorylation and activation of the RET receptor. The protein is GDNF family receptor alpha-2 (GFRA2) of Gallus gallus (Chicken).